Here is a 128-residue protein sequence, read N- to C-terminus: Glycine cleavage system H protein (128 aa).

Positions 24–106 constitute a Lipoyl-binding domain; the sequence is LVRIGISEFA…HGEGWLLIIR (83 aa). The residue at position 65 (lysine 65) is an N6-lipoyllysine.

It belongs to the GcvH family. As to quaternary structure, the glycine cleavage system is composed of four proteins: P, T, L and H. (R)-lipoate is required as a cofactor.

Its function is as follows. The glycine cleavage system catalyzes the degradation of glycine. The H protein shuttles the methylamine group of glycine from the P protein to the T protein. This Prochlorococcus marinus (strain NATL1A) protein is Glycine cleavage system H protein.